The chain runs to 309 residues: Movement protein (309 aa).

Residues 245–273 are disordered; the sequence is HLSLNESKTLPSTSTTEAEGSERRIHIGA. Positions 246 to 262 are enriched in polar residues; sequence LSLNESKTLPSTSTTEA.

The protein localises to the host cell junction. It localises to the host plasmodesma. Transports viral genome to neighboring plant cells directly through plasmosdesmata, without any budding. The movement protein allows efficient cell to cell propagation, by bypassing the host cell wall barrier. Acts by forming a tubular structure at the host plasmodesmata, enlarging it enough to allow free passage of virion capsids. The sequence is that of Movement protein from Solanum lycopersicum (Tomato).